The chain runs to 164 residues: Thiol peroxidase (164 aa).

Positions 18 to 163 constitute a Thioredoxin domain; that stretch reads VSEGQHAPDF…FDAALEAYRN (146 aa). Residue cysteine 60 is the Cysteine sulfenic acid (-SOH) intermediate of the active site. Cysteine 60 and cysteine 93 form a disulfide bridge.

It belongs to the peroxiredoxin family. Tpx subfamily. Homodimer.

It carries out the reaction a hydroperoxide + [thioredoxin]-dithiol = an alcohol + [thioredoxin]-disulfide + H2O. In terms of biological role, thiol-specific peroxidase that catalyzes the reduction of hydrogen peroxide and organic hydroperoxides to water and alcohols, respectively. Plays a role in cell protection against oxidative stress by detoxifying peroxides. The chain is Thiol peroxidase from Staphylococcus haemolyticus (strain JCSC1435).